A 329-amino-acid polypeptide reads, in one-letter code: Replication factor C small subunit 1 (329 aa).

44–51 contributes to the ATP binding site; that stretch reads GPPGTGKT.

It belongs to the activator 1 small subunits family. RfcS subfamily. As to quaternary structure, heteromultimer composed of small subunits (RfcS) and large subunits (RfcL).

Part of the RFC clamp loader complex which loads the PCNA sliding clamp onto DNA. This is Replication factor C small subunit 1 from Pyrobaculum aerophilum (strain ATCC 51768 / DSM 7523 / JCM 9630 / CIP 104966 / NBRC 100827 / IM2).